Here is a 185-residue protein sequence, read N- to C-terminus: Ribosome-recycling factor (185 aa).

This sequence belongs to the RRF family.

Its subcellular location is the cytoplasm. Responsible for the release of ribosomes from messenger RNA at the termination of protein biosynthesis. May increase the efficiency of translation by recycling ribosomes from one round of translation to another. This Salinispora arenicola (strain CNS-205) protein is Ribosome-recycling factor.